A 102-amino-acid chain; its full sequence is Vacuolar ATPase assembly integral membrane protein VMA21 (102 aa).

Residues 1–30 lie on the Cytoplasmic side of the membrane; that stretch reads MERYDKATLNAAFAPEFRQNEGSLTSTLRT. A helical membrane pass occupies residues 31–51; it reads LLFFTALMITLPVGLYFSSKA. Topologically, residues 52–66 are lumenal; that stretch reads YIFEGTLGMSNRDSY. The helical transmembrane segment at 67 to 87 threads the bilayer; that stretch reads FYAAIVAVVTVHVVLAMFVYV. The Cytoplasmic portion of the chain corresponds to 88–102; it reads AWSEGTRQWREGKQD.

This sequence belongs to the VMA21 family. In terms of assembly, associates with the V0 complex of the vacuolar ATPase (V-ATPase). Interacts with ATP6AP2.

The protein resides in the endoplasmic reticulum membrane. Its subcellular location is the endoplasmic reticulum-Golgi intermediate compartment membrane. The protein localises to the cytoplasmic vesicle. It is found in the COPII-coated vesicle membrane. Its function is as follows. Required for the assembly of the V0 complex of the vacuolar ATPase (V-ATPase) in the endoplasmic reticulum. This Gallus gallus (Chicken) protein is Vacuolar ATPase assembly integral membrane protein VMA21.